The chain runs to 196 residues: Leucyl/phenylalanyl-tRNA--protein transferase (196 aa).

This sequence belongs to the L/F-transferase family.

Its subcellular location is the cytoplasm. It catalyses the reaction N-terminal L-lysyl-[protein] + L-leucyl-tRNA(Leu) = N-terminal L-leucyl-L-lysyl-[protein] + tRNA(Leu) + H(+). The enzyme catalyses N-terminal L-arginyl-[protein] + L-leucyl-tRNA(Leu) = N-terminal L-leucyl-L-arginyl-[protein] + tRNA(Leu) + H(+). The catalysed reaction is L-phenylalanyl-tRNA(Phe) + an N-terminal L-alpha-aminoacyl-[protein] = an N-terminal L-phenylalanyl-L-alpha-aminoacyl-[protein] + tRNA(Phe). In terms of biological role, functions in the N-end rule pathway of protein degradation where it conjugates Leu, Phe and, less efficiently, Met from aminoacyl-tRNAs to the N-termini of proteins containing an N-terminal arginine or lysine. The chain is Leucyl/phenylalanyl-tRNA--protein transferase from Thermosynechococcus vestitus (strain NIES-2133 / IAM M-273 / BP-1).